The chain runs to 123 residues: uncharacterized protein (123 aa).

Disordered stretches follow at residues 1–33 and 82–123; these read MAPP…RRRK and EKAA…EDKS. The segment covering 18–33 has biased composition (basic residues); sequence KLFKRRRVLSRDRRRK.

This is an uncharacterized protein from Mus musculus (Mouse).